The chain runs to 74 residues: Protein krueppel (74 aa).

C2H2-type zinc fingers lie at residues 1 to 4 (ERTH), 10 to 32 (FECP…MRLH), 38 to 60 (YHCS…LRVH), and 66 to 74 (YACELCDAR).

It belongs to the krueppel C2H2-type zinc-finger protein family.

It is found in the nucleus. Its function is as follows. Krueppel is a gap class segmentation protein. In Psychoda cinerea (Psychod fly), this protein is Protein krueppel (Kr).